The sequence spans 537 residues: LLLCVGLLLVLKHHDGAAHKLVCYFTNWAFSRPGPASILPRDLDPFLCTHLVFAFASMSNNQIVPKDPQDEKILYPEFNKLKERNRGLKTLLSIGGWNFGTVRFTTMLSTFSNRERFVSSVIALLRTHGFDGLDLFFLYPGLRGSPARDRWTFVFLLEELLQAFKNEAQLTMRPRLLLSAAVSGDPHVVQKAYEARLLGRLLDFISVLSYDLHGSWEKVTGHNSPLFSLPGDPKSSAYAMNYWRQLGVPPEKLLMGLPTYGRTFHLLKASQNELRAQAVGPASPGKYTKQAGFLAYYEICCFVRRAKKRWINDQYVPYAFKGKEWVGYDDAISFGYKAFFIKREHFGGAMVWTLDLDDFRGYFCGTGPFPLVHTLNNLLVNDEFSSTPSPKFWFSTAVNSSRIGPEMPTMTRDLTTGLGILPPGGEAVATETHRKSETMTITPKGEIATPTRTPLSFGRHTAAPEGKTESPGEKPLTTVGHLAVSPGGIAVGPVRLQTGQKVTPPGRKAGVPEKVTTPSGKMTVTPDGRAETLERRL.

The N-terminal stretch at L1–A18 is a signal peptide. A GH18 domain is found at H19–D382. C23 and C48 form a disulfide bridge. Residues P68–Q69, G95–N98, Y139, L208–D211, and W352 contribute to the chitin site. N399 carries N-linked (GlcNAc...) asparagine glycosylation. Disordered regions lie at residues E446–P475 and T498–L537. Residues G528–L537 show a composition bias toward basic and acidic residues.

This sequence belongs to the glycosyl hydrolase 18 family. As to expression, oviduct.

It localises to the cytoplasmic vesicle. It is found in the secretory vesicle. Functionally, binds to oocyte zona pellucida in vivo. May play a role in the fertilization process and/or early embryonic development. This chain is Oviduct-specific glycoprotein (OVGP1), found in Bos taurus (Bovine).